Here is a 37-residue protein sequence, read N- to C-terminus: Large ribosomal subunit protein bL36 (37 aa).

The protein belongs to the bacterial ribosomal protein bL36 family.

The protein is Large ribosomal subunit protein bL36 of Chromobacterium violaceum (strain ATCC 12472 / DSM 30191 / JCM 1249 / CCUG 213 / NBRC 12614 / NCIMB 9131 / NCTC 9757 / MK).